We begin with the raw amino-acid sequence, 60 residues long: Beta-defensin 11 (60 aa).

Residues M1 to S22 form the signal peptide. Disulfide bonds link C27/C56, C34/C49, and C39/C57.

It belongs to the beta-defensin family. In terms of tissue distribution, neutrophilic granules.

It is found in the secreted. In terms of biological role, has bactericidal activity. Active against E.coli ML35 and S.aureus 502A. The polypeptide is Beta-defensin 11 (DEFB11) (Bos taurus (Bovine)).